The sequence spans 326 residues: MTKYAKIIGTGSYLPPRRVTNHDLATQLAEKGIETSDDWIVSRSGISARHWAEPDVTSSDLAVKAAEQAIEAAGIDRQSIDLIIVATSTPDFVFPSTACIVQEKLGITNHCPAFDLQAVCSGFVYALATADKFIRSGSHRNVLVIGTEVFSRILDFNDRTTCVLFGDGAGAVLLSASEEPGILSTAMHSDGRHVDILCVPGNVAGGNITGNPFLHMDGQAVFKLAVNVLDKVAREAMEAASVTPGQIDWLIPHQANIRIMQGTAKKLGLPAERMVATVHEHGNTSAASIPLALDVAVRDGRIRAGQTVLMEGVGGGFTWGAVLLRM.

Residues Cys120 and His253 contribute to the active site. The ACP-binding stretch occupies residues 254–258 (QANIR). Asn283 is a catalytic residue.

This sequence belongs to the thiolase-like superfamily. FabH family. In terms of assembly, homodimer.

It localises to the cytoplasm. It carries out the reaction malonyl-[ACP] + acetyl-CoA + H(+) = 3-oxobutanoyl-[ACP] + CO2 + CoA. It functions in the pathway lipid metabolism; fatty acid biosynthesis. Its function is as follows. Catalyzes the condensation reaction of fatty acid synthesis by the addition to an acyl acceptor of two carbons from malonyl-ACP. Catalyzes the first condensation reaction which initiates fatty acid synthesis and may therefore play a role in governing the total rate of fatty acid production. Possesses both acetoacetyl-ACP synthase and acetyl transacylase activities. Its substrate specificity determines the biosynthesis of branched-chain and/or straight-chain of fatty acids. The polypeptide is Beta-ketoacyl-[acyl-carrier-protein] synthase III (Cupriavidus necator (strain ATCC 17699 / DSM 428 / KCTC 22496 / NCIMB 10442 / H16 / Stanier 337) (Ralstonia eutropha)).